The following is a 37-amino-acid chain: Photosystem I reaction center subunit VIII (37 aa).

The helical transmembrane segment at 7–27 (LPSFFVPLVGLVFPAIAMASL) threads the bilayer.

This sequence belongs to the PsaI family.

Its subcellular location is the plastid. The protein resides in the chloroplast thylakoid membrane. In terms of biological role, may help in the organization of the PsaL subunit. The sequence is that of Photosystem I reaction center subunit VIII from Eucalyptus globulus subsp. globulus (Tasmanian blue gum).